We begin with the raw amino-acid sequence, 649 residues long: Mediator of RNA polymerase II transcription subunit 17 (649 aa).

A disordered region spans residues Gln-51–Asp-79.

This sequence belongs to the Mediator complex subunit 17 family. In terms of assembly, component of the Mediator complex, which is composed of MED1, MED4, MED6, MED7, MED8, MED9, MED10, MED11, MED12, MED13, MED13L, MED14, MED15, MED16, MED17, MED18, MED19, MED20, MED21, MED22, MED23, MED24, MED25, MED26, MED27, MED29, MED30, MED31, CCNC, CDK8 and CDC2L6/CDK11. The MED12, MED13, CCNC and CDK8 subunits form a distinct module termed the CDK8 module. Mediator containing the CDK8 module is less active than Mediator lacking this module in supporting transcriptional activation. Individual preparations of the Mediator complex lacking one or more distinct subunits have been variously termed ARC, CRSP, DRIP, PC2, SMCC and TRAP. Interacts with STAT2. Interacts with GATA1 and PPARG.

Its subcellular location is the nucleus. In terms of biological role, component of the Mediator complex, a coactivator involved in the regulated transcription of nearly all RNA polymerase II-dependent genes. Mediator functions as a bridge to convey information from gene-specific regulatory proteins to the basal RNA polymerase II transcription machinery. Mediator is recruited to promoters by direct interactions with regulatory proteins and serves as a scaffold for the assembly of a functional preinitiation complex with RNA polymerase II and the general transcription factors. The sequence is that of Mediator of RNA polymerase II transcription subunit 17 (Med17) from Mus musculus (Mouse).